Here is a 715-residue protein sequence, read N- to C-terminus: uncharacterized protein (715 aa).

This is an uncharacterized protein from Mycobacterium tuberculosis (strain CDC 1551 / Oshkosh).